Consider the following 405-residue polypeptide: Argininosuccinate synthase (405 aa).

ATP is bound by residues 10 to 18 (AYSGGLDTS) and A37. Positions 88 and 93 each coordinate L-citrulline. G118 lines the ATP pocket. The L-aspartate site is built by T120, N124, and D125. An L-citrulline-binding site is contributed by N124. The L-citrulline site is built by R128, S179, S188, E264, and Y276.

It belongs to the argininosuccinate synthase family. Type 1 subfamily. In terms of assembly, homotetramer.

It localises to the cytoplasm. It carries out the reaction L-citrulline + L-aspartate + ATP = 2-(N(omega)-L-arginino)succinate + AMP + diphosphate + H(+). It functions in the pathway amino-acid biosynthesis; L-arginine biosynthesis; L-arginine from L-ornithine and carbamoyl phosphate: step 2/3. This chain is Argininosuccinate synthase, found in Pseudomonas aeruginosa (strain LESB58).